Reading from the N-terminus, the 245-residue chain is MDPSENVFKYETAYDLLVRLGAERLFLRTCLSILDPVLELHPGKCYEIDGDLGVGKTQICYSFAAKFLQTKKTAKMGWIGATPLRTDHLLLHIEHFGNQTNEDILDRIVCKRVEKIAELQDSLTRFLDTINLQLVIVENIDAILHDTVYHKEMGRSMQSDVVERIRKLTKLEITVILTNHITHWRGYPAPALGAFWSSQINNRFFIEKRNDDSDIRIVSAMKGEQDDGMNRIEFKIGDRGLKAVE.

In terms of assembly, interacts with brc-2 and rad-51.

The protein resides in the nucleus. Functionally, has a role in the homologous recombination repair (HRR) of genomic DNA during meiosis. Required for rad-51 recruitment onto ssDNA gaps generated at stalled replication fork barriers. The polypeptide is RAD51-like protein 1 (rfs-1) (Caenorhabditis elegans).